A 463-amino-acid polypeptide reads, in one-letter code: Nuclear hormone receptor family member nhr-79 (463 aa).

The segment at residues 3-81 (RGKCMVCDSP…AGMMRDLVQA (79 aa)) is a DNA-binding region (nuclear receptor). NR C4-type zinc fingers lie at residues 6–27 (CMVC…CKAC) and 43–64 (CLGD…CRHC). Positions 83-119 (REIKSDKGKNSRNSSQSEDFFSPPPEQPGPSNYFDQF) are disordered. One can recognise an NR LBD domain in the interval 203 to 463 (YTEQVINLNM…ILKDMLKFQY (261 aa)).

It belongs to the nuclear hormone receptor family.

The protein localises to the nucleus. Orphan nuclear receptor. The chain is Nuclear hormone receptor family member nhr-79 (nhr-79) from Caenorhabditis elegans.